Consider the following 346-residue polypeptide: Phosphoribosylformylglycinamidine cyclo-ligase (346 aa).

Belongs to the AIR synthase family.

Its subcellular location is the cytoplasm. It carries out the reaction 2-formamido-N(1)-(5-O-phospho-beta-D-ribosyl)acetamidine + ATP = 5-amino-1-(5-phospho-beta-D-ribosyl)imidazole + ADP + phosphate + H(+). It participates in purine metabolism; IMP biosynthesis via de novo pathway; 5-amino-1-(5-phospho-D-ribosyl)imidazole from N(2)-formyl-N(1)-(5-phospho-D-ribosyl)glycinamide: step 2/2. This is Phosphoribosylformylglycinamidine cyclo-ligase from Shewanella piezotolerans (strain WP3 / JCM 13877).